The chain runs to 558 residues: NAD(P)H-quinone oxidoreductase chain 4 (558 aa).

The next 15 membrane-spanning stretches (helical) occupy residues 25-45 (FPWL…VPFV), 56-76 (WFAL…YLTG), 90-110 (VSWL…LSMP), 111-131 (LILL…PVTF), 133-153 (PKLF…VFAV), 157-177 (LLFF…LAIW), 189-209 (FILY…AMGF), 230-250 (GFEL…LPIV), 264-284 (TAPV…YALM), 298-318 (FAPL…LTSF), 327-347 (IAYS…SFSE), 353-373 (AMLQ…LVGA), 397-417 (FALW…SGFV), 438-458 (IVID…LLSM), and 485-505 (VYII…PKLM).

It belongs to the complex I subunit 4 family.

The protein resides in the cellular thylakoid membrane. The enzyme catalyses a plastoquinone + NADH + (n+1) H(+)(in) = a plastoquinol + NAD(+) + n H(+)(out). The catalysed reaction is a plastoquinone + NADPH + (n+1) H(+)(in) = a plastoquinol + NADP(+) + n H(+)(out). Its function is as follows. NDH-1 shuttles electrons from NAD(P)H, via FMN and iron-sulfur (Fe-S) centers, to quinones in the respiratory chain. The immediate electron acceptor for the enzyme in this species is believed to be plastoquinone. Couples the redox reaction to proton translocation (for every two electrons transferred, four hydrogen ions are translocated across the cytoplasmic membrane), and thus conserves the redox energy in a proton gradient. This chain is NAD(P)H-quinone oxidoreductase chain 4, found in Synechococcus sp. (strain CC9311).